Reading from the N-terminus, the 54-residue chain is Large ribosomal subunit protein bL33A (54 aa).

The protein belongs to the bacterial ribosomal protein bL33 family.

This Myxococcus xanthus (strain DK1622) protein is Large ribosomal subunit protein bL33A.